The following is a 465-amino-acid chain: Putative mannose-1-phosphate guanylyltransferase (465 aa).

The protein belongs to the mannose-6-phosphate isomerase type 2 family.

It carries out the reaction alpha-D-mannose 1-phosphate + GTP + H(+) = GDP-alpha-D-mannose + diphosphate. Its pathway is nucleotide-sugar biosynthesis; GDP-alpha-D-mannose biosynthesis; GDP-alpha-D-mannose from alpha-D-mannose 1-phosphate (GTP route): step 1/1. The protein operates within bacterial outer membrane biogenesis; LPS O-antigen biosynthesis. In Vibrio cholerae serotype O1 (strain ATCC 39315 / El Tor Inaba N16961), this protein is Putative mannose-1-phosphate guanylyltransferase (rfbA).